Consider the following 528-residue polypeptide: Inositol-3-phosphate synthase (528 aa).

NAD(+)-binding residues include Gly-66, Gly-67, Asn-68, Asn-69, Asp-140, Gln-187, Arg-190, Thr-228, Ala-229, Asn-230, Thr-231, Gly-279, Asp-304, Ser-307, Asn-338, Asn-339, Asp-340, Lys-353, Gly-392, Asp-393, Asp-421, and Ser-422.

It belongs to the myo-inositol 1-phosphate synthase family. Requires NAD(+) as cofactor.

It localises to the cytoplasm. The protein localises to the cytosol. The catalysed reaction is D-glucose 6-phosphate = 1D-myo-inositol 3-phosphate. It functions in the pathway polyol metabolism; myo-inositol biosynthesis; myo-inositol from D-glucose 6-phosphate: step 1/2. Activated by ammonium ions. Functionally, key enzyme in myo-inositol biosynthesis pathway that catalyzes the conversion of glucose 6-phosphate to 1-myo-inositol 1-phosphate in a NAD-dependent manner. Rate-limiting enzyme in the synthesis of all inositol-containing compounds. De novo-synthesized myo-inositol is essential for incorporation into GPI (glycosylphosphatidylinositol) glycolipids in the bloodstream form. In Trypanosoma brucei brucei, this protein is Inositol-3-phosphate synthase.